The primary structure comprises 512 residues: Maturase K (512 aa).

Belongs to the intron maturase 2 family. MatK subfamily.

It localises to the plastid. The protein resides in the chloroplast. Functionally, usually encoded in the trnK tRNA gene intron. Probably assists in splicing its own and other chloroplast group II introns. This is Maturase K from Platanus occidentalis (Sycamore).